The sequence spans 382 residues: Mannitol-1-phosphate 5-dehydrogenase (382 aa).

An NAD(+)-binding site is contributed by 3–14 (ALHFGAGNIGRG).

The protein belongs to the mannitol dehydrogenase family.

It carries out the reaction D-mannitol 1-phosphate + NAD(+) = beta-D-fructose 6-phosphate + NADH + H(+). This Salmonella schwarzengrund (strain CVM19633) protein is Mannitol-1-phosphate 5-dehydrogenase.